Reading from the N-terminus, the 485-residue chain is Cobyric acid synthase (485 aa).

Residues 249 to 437 (HLKIRVPVWQ…WHGLFSQPSA (189 aa)) form the GATase cobBQ-type domain. The Nucleophile role is filled by C330. H429 is a catalytic residue.

This sequence belongs to the CobB/CobQ family. CobQ subfamily.

Its pathway is cofactor biosynthesis; adenosylcobalamin biosynthesis. Functionally, catalyzes amidations at positions B, D, E, and G on adenosylcobyrinic A,C-diamide. NH(2) groups are provided by glutamine, and one molecule of ATP is hydrogenolyzed for each amidation. This chain is Cobyric acid synthase, found in Saccharophagus degradans (strain 2-40 / ATCC 43961 / DSM 17024).